We begin with the raw amino-acid sequence, 540 residues long: Chaperonin GroEL 1 (540 aa).

Residues 30–33 (TLGP), lysine 51, 87–91 (DGTTT), glycine 415, 480–482 (NAA), and aspartate 496 each bind ATP.

It belongs to the chaperonin (HSP60) family. As to quaternary structure, forms a cylinder of 14 subunits composed of two heptameric rings stacked back-to-back. Interacts with the co-chaperonin GroES.

The protein resides in the cytoplasm. The catalysed reaction is ATP + H2O + a folded polypeptide = ADP + phosphate + an unfolded polypeptide.. In terms of biological role, together with its co-chaperonin GroES, plays an essential role in assisting protein folding. The GroEL-GroES system forms a nano-cage that allows encapsulation of the non-native substrate proteins and provides a physical environment optimized to promote and accelerate protein folding. The sequence is that of Chaperonin GroEL 1 from Bradyrhizobium diazoefficiens (strain JCM 10833 / BCRC 13528 / IAM 13628 / NBRC 14792 / USDA 110).